The sequence spans 200 residues: Nitrile hydratase subunit alpha (200 aa).

Positions 105, 108, 109, and 110 each coordinate Fe(3+). The residue at position 108 (Cys-108) is a Cysteine sulfinic acid (-SO2H). Position 110 is a cysteine sulfenic acid (-SOH) (Cys-110).

The protein belongs to the nitrile hydratase subunit alpha family. In terms of assembly, heterodimer of an alpha and a beta chain. The cofactor is Fe(3+). Oxidation on Cys-108 is essential for the activity. Post-translationally, oxidation on Cys-110 stabilizes the Fe-NO ligand coordinated in the inactive form.

It catalyses the reaction an aliphatic primary amide = an aliphatic nitrile + H2O. Inactivated by oxidation of Cys-110 to a sulfenic acid. NHase catalyzes the hydration of various nitrile compounds to the corresponding amides. Industrial production of acrylamide is now being developed using some of the enzymes of this class. In Pseudomonas chlororaphis (Pseudomonas aureofaciens), this protein is Nitrile hydratase subunit alpha (nthA).